We begin with the raw amino-acid sequence, 418 residues long: Gamma-glutamyl phosphate reductase (418 aa).

This sequence belongs to the gamma-glutamyl phosphate reductase family.

The protein localises to the cytoplasm. It carries out the reaction L-glutamate 5-semialdehyde + phosphate + NADP(+) = L-glutamyl 5-phosphate + NADPH + H(+). The protein operates within amino-acid biosynthesis; L-proline biosynthesis; L-glutamate 5-semialdehyde from L-glutamate: step 2/2. In terms of biological role, catalyzes the NADPH-dependent reduction of L-glutamate 5-phosphate into L-glutamate 5-semialdehyde and phosphate. The product spontaneously undergoes cyclization to form 1-pyrroline-5-carboxylate. The sequence is that of Gamma-glutamyl phosphate reductase from Chlorobium limicola (strain DSM 245 / NBRC 103803 / 6330).